The following is a 162-amino-acid chain: NADPH-dependent 7-cyano-7-deazaguanine reductase (162 aa).

Cysteine 53 serves as the catalytic Thioimide intermediate. Aspartate 60 functions as the Proton donor in the catalytic mechanism. Substrate-binding positions include 75 to 77 and 94 to 95; these read VES and HE.

It belongs to the GTP cyclohydrolase I family. QueF type 1 subfamily.

Its subcellular location is the cytoplasm. The catalysed reaction is 7-aminomethyl-7-carbaguanine + 2 NADP(+) = 7-cyano-7-deazaguanine + 2 NADPH + 3 H(+). The protein operates within tRNA modification; tRNA-queuosine biosynthesis. Its function is as follows. Catalyzes the NADPH-dependent reduction of 7-cyano-7-deazaguanine (preQ0) to 7-aminomethyl-7-deazaguanine (preQ1). The protein is NADPH-dependent 7-cyano-7-deazaguanine reductase of Streptococcus mutans serotype c (strain ATCC 700610 / UA159).